The sequence spans 622 residues: Matrilin-4 (622 aa).

A signal peptide spans 1 to 18 (MRGLLCWPVLLLLLQPWE). The VWFA 1 domain occupies 34–213 (DLVFVIDSSR…EFGLQFQSRL (180 aa)). N-linked (GlcNAc...) asparagine glycosylation occurs at asparagine 69. The 41-residue stretch at 215 to 255 (GKDQCAEGGHGCQHQCVNAWAMFHCTCNPGYKLAADNKSCL) folds into the EGF-like 1; incomplete domain. 12 disulfide bridges follow: cysteine 219-cysteine 230, cysteine 226-cysteine 239, cysteine 241-cysteine 254, cysteine 260-cysteine 271, cysteine 267-cysteine 280, cysteine 282-cysteine 295, cysteine 301-cysteine 312, cysteine 308-cysteine 321, cysteine 323-cysteine 336, cysteine 342-cysteine 353, cysteine 349-cysteine 362, and cysteine 364-cysteine 377. An N-linked (GlcNAc...) asparagine glycan is attached at asparagine 251. 3 EGF-like domains span residues 256–292 (AIDL…QQDQ), 297–337 (AIDY…RSCQ), and 342–377 (CNGV…GKSC). A glycan (N-linked (GlcNAc...) asparagine) is linked at asparagine 305. Residues 386–561 (DLVLLVDGSK…GTMTHLLENL (176 aa)) form the VWFA 2 domain. Residues 591 to 622 (GRTLGALESLTLNLAQLTARLEDLENQLANQK) are a coiled coil.

Interacts with COMP. In terms of tissue distribution, embryonic kidney, lung and placenta.

It is found in the secreted. In terms of biological role, major component of the extracellular matrix of cartilage. This chain is Matrilin-4 (MATN4), found in Homo sapiens (Human).